A 166-amino-acid polypeptide reads, in one-letter code: Phosphopantetheine adenylyltransferase (166 aa).

Ser-10 contributes to the substrate binding site. ATP-binding positions include 10–11 and His-18; that span reads SF. Substrate contacts are provided by Lys-42, Ala-79, and Arg-93. Residues 94–96, Glu-104, and 129–135 each bind ATP; these read GLR and VRPITAT.

It belongs to the bacterial CoaD family. In terms of assembly, homohexamer. The cofactor is Mg(2+).

Its subcellular location is the cytoplasm. The catalysed reaction is (R)-4'-phosphopantetheine + ATP + H(+) = 3'-dephospho-CoA + diphosphate. The protein operates within cofactor biosynthesis; coenzyme A biosynthesis; CoA from (R)-pantothenate: step 4/5. Its function is as follows. Reversibly transfers an adenylyl group from ATP to 4'-phosphopantetheine, yielding dephospho-CoA (dPCoA) and pyrophosphate. In Methylobacterium sp. (strain 4-46), this protein is Phosphopantetheine adenylyltransferase.